Reading from the N-terminus, the 368-residue chain is Protein RecA (368 aa).

80-87 contacts ATP; the sequence is GPESSGKT. Positions 344–353 are enriched in polar residues; sequence NPTFTATPDS. A disordered region spans residues 344 to 368; the sequence is NPTFTATPDSENADNADDEFSEEEL. Acidic residues predominate over residues 354–368; the sequence is ENADNADDEFSEEEL.

Belongs to the RecA family.

Its subcellular location is the cytoplasm. In terms of biological role, can catalyze the hydrolysis of ATP in the presence of single-stranded DNA, the ATP-dependent uptake of single-stranded DNA by duplex DNA, and the ATP-dependent hybridization of homologous single-stranded DNAs. It interacts with LexA causing its activation and leading to its autocatalytic cleavage. The sequence is that of Protein RecA from Mannheimia haemolytica (Pasteurella haemolytica).